The following is a 152-amino-acid chain: 3-hydroxyacyl-[acyl-carrier-protein] dehydratase FabZ (152 aa).

H57 is a catalytic residue.

This sequence belongs to the thioester dehydratase family. FabZ subfamily.

The protein resides in the cytoplasm. The enzyme catalyses a (3R)-hydroxyacyl-[ACP] = a (2E)-enoyl-[ACP] + H2O. Its function is as follows. Involved in unsaturated fatty acids biosynthesis. Catalyzes the dehydration of short chain beta-hydroxyacyl-ACPs and long chain saturated and unsaturated beta-hydroxyacyl-ACPs. The chain is 3-hydroxyacyl-[acyl-carrier-protein] dehydratase FabZ from Pasteurella multocida (strain Pm70).